The chain runs to 167 residues: N5-carboxyaminoimidazole ribonucleotide mutase (167 aa).

Substrate contacts are provided by Ser11, Asp14, and Arg41.

Belongs to the AIR carboxylase family. Class I subfamily.

The enzyme catalyses 5-carboxyamino-1-(5-phospho-D-ribosyl)imidazole + H(+) = 5-amino-1-(5-phospho-D-ribosyl)imidazole-4-carboxylate. It participates in purine metabolism; IMP biosynthesis via de novo pathway; 5-amino-1-(5-phospho-D-ribosyl)imidazole-4-carboxylate from 5-amino-1-(5-phospho-D-ribosyl)imidazole (N5-CAIR route): step 2/2. In terms of biological role, catalyzes the conversion of N5-carboxyaminoimidazole ribonucleotide (N5-CAIR) to 4-carboxy-5-aminoimidazole ribonucleotide (CAIR). This Aquifex aeolicus (strain VF5) protein is N5-carboxyaminoimidazole ribonucleotide mutase.